We begin with the raw amino-acid sequence, 430 residues long: Glutamate-1-semialdehyde 2,1-aminomutase 2 (430 aa).

Lysine 268 is modified (N6-(pyridoxal phosphate)lysine).

The protein belongs to the class-III pyridoxal-phosphate-dependent aminotransferase family. HemL subfamily. Homodimer. Requires pyridoxal 5'-phosphate as cofactor.

The protein localises to the cytoplasm. It carries out the reaction (S)-4-amino-5-oxopentanoate = 5-aminolevulinate. The protein operates within porphyrin-containing compound metabolism; protoporphyrin-IX biosynthesis; 5-aminolevulinate from L-glutamyl-tRNA(Glu): step 2/2. In Shouchella clausii (strain KSM-K16) (Alkalihalobacillus clausii), this protein is Glutamate-1-semialdehyde 2,1-aminomutase 2.